The following is a 362-amino-acid chain: Chorismate synthase (362 aa).

An NADP(+)-binding site is contributed by R46. FMN is bound by residues 122 to 124 (RSS), 238 to 239 (NA), G278, 293 to 297 (KPTPS), and R319.

This sequence belongs to the chorismate synthase family. As to quaternary structure, homotetramer. Requires FMNH2 as cofactor.

It catalyses the reaction 5-O-(1-carboxyvinyl)-3-phosphoshikimate = chorismate + phosphate. The protein operates within metabolic intermediate biosynthesis; chorismate biosynthesis; chorismate from D-erythrose 4-phosphate and phosphoenolpyruvate: step 7/7. Functionally, catalyzes the anti-1,4-elimination of the C-3 phosphate and the C-6 proR hydrogen from 5-enolpyruvylshikimate-3-phosphate (EPSP) to yield chorismate, which is the branch point compound that serves as the starting substrate for the three terminal pathways of aromatic amino acid biosynthesis. This reaction introduces a second double bond into the aromatic ring system. The protein is Chorismate synthase of Campylobacter jejuni subsp. jejuni serotype O:23/36 (strain 81-176).